Reading from the N-terminus, the 190-residue chain is Xanthine phosphoribosyltransferase (190 aa).

Xanthine is bound by residues Leu20 and Asn27. 128 to 132 (ANGNA) contributes to the 5-phospho-alpha-D-ribose 1-diphosphate binding site. Lys156 contributes to the xanthine binding site.

It belongs to the purine/pyrimidine phosphoribosyltransferase family. Xpt subfamily. Homodimer.

The protein localises to the cytoplasm. The catalysed reaction is XMP + diphosphate = xanthine + 5-phospho-alpha-D-ribose 1-diphosphate. It functions in the pathway purine metabolism; XMP biosynthesis via salvage pathway; XMP from xanthine: step 1/1. Functionally, converts the preformed base xanthine, a product of nucleic acid breakdown, to xanthosine 5'-monophosphate (XMP), so it can be reused for RNA or DNA synthesis. The protein is Xanthine phosphoribosyltransferase of Clostridium novyi (strain NT).